The sequence spans 155 residues: Snaclec clone 2100755 (155 aa).

The N-terminal stretch at 1–23 (MGRFIFVSFGLLVVFLSLSGTAA) is a signal peptide. Cystine bridges form between C25–C36, C53–C144, and C119–C136. One can recognise a C-type lectin domain in the interval 32–145 (YDGHCYQVFS…CEKSVSFVCK (114 aa)).

The protein belongs to the snaclec family. In terms of assembly, heterodimer; disulfide-linked.

It is found in the secreted. In terms of biological role, interferes with one step of hemostasis (modulation of platelet aggregation, or coagulation cascade, for example). The chain is Snaclec clone 2100755 from Deinagkistrodon acutus (Hundred-pace snake).